The sequence spans 306 residues: Tryptophan 2,3-dioxygenase (306 aa).

Residues 1–29 (MQPPGDDAAPRCPFAGAHAPDAPHVPEAA) are disordered. Substrate-binding positions include 75 to 79 (FIIQH), Y137, and R141. Heme is bound at residue H264. T278 serves as a coordination point for substrate.

This sequence belongs to the tryptophan 2,3-dioxygenase family. Homotetramer. Heme serves as cofactor.

It carries out the reaction L-tryptophan + O2 = N-formyl-L-kynurenine. It participates in amino-acid degradation; L-tryptophan degradation via kynurenine pathway; L-kynurenine from L-tryptophan: step 1/2. Functionally, heme-dependent dioxygenase that catalyzes the oxidative cleavage of the L-tryptophan (L-Trp) pyrrole ring and converts L-tryptophan to N-formyl-L-kynurenine. Catalyzes the oxidative cleavage of the indole moiety. In Burkholderia mallei (strain NCTC 10247), this protein is Tryptophan 2,3-dioxygenase.